Consider the following 102-residue polypeptide: ATP-dependent Clp protease adapter protein ClpS (102 aa).

The protein belongs to the ClpS family. Binds to the N-terminal domain of the chaperone ClpA.

Involved in the modulation of the specificity of the ClpAP-mediated ATP-dependent protein degradation. In Aromatoleum aromaticum (strain DSM 19018 / LMG 30748 / EbN1) (Azoarcus sp. (strain EbN1)), this protein is ATP-dependent Clp protease adapter protein ClpS.